The primary structure comprises 701 residues: CRS2-associated factor 1, chloroplastic (701 aa).

The N-terminal 37 residues, 1–37 (MSLKLNTPFPIFAPSLFPNHNPRAPSEIRFSRWGNAN), are a transit peptide targeting the chloroplast. Disordered regions lie at residues 68–136 (VHTH…PEVK) and 191–221 (LPQS…QKPG). CRM domains are found at residues 241-337 (EPLT…TRPR) and 359-455 (EGLT…LTTP). Positions 471-532 (LPEDDEPSVS…SLQSWSTKDV (62 aa)) are disordered. Polar residues-rich tracts occupy residues 479–492 (VSPN…QNPP) and 520–530 (TINSLQSWSTK). The segment at 564–586 (RVLILMKQAVESGTALVLDAADL) is CRS2 binding.

As to quaternary structure, interacts with CRS2 and RNA. Part of large ribonucleo-protein complexes that include group IIB introns, CRS2 and CAF1.

Its subcellular location is the plastid. It is found in the chloroplast stroma. Functionally, required for the splicing of group IIB introns in chloroplasts. Forms splicing particles with CRS2. Interacts with RNA and confers intron specificity of the splicing particles. This Arabidopsis thaliana (Mouse-ear cress) protein is CRS2-associated factor 1, chloroplastic.